Reading from the N-terminus, the 591-residue chain is Isocitrate dehydrogenase kinase/phosphatase (591 aa).

Residues 322-328 (APGIRGL) and Lys-343 each bind ATP. Asp-378 is a catalytic residue.

The protein belongs to the AceK family.

The protein resides in the cytoplasm. The catalysed reaction is L-seryl-[isocitrate dehydrogenase] + ATP = O-phospho-L-seryl-[isocitrate dehydrogenase] + ADP + H(+). Functionally, bifunctional enzyme which can phosphorylate or dephosphorylate isocitrate dehydrogenase (IDH) on a specific serine residue. This is a regulatory mechanism which enables bacteria to bypass the Krebs cycle via the glyoxylate shunt in response to the source of carbon. When bacteria are grown on glucose, IDH is fully active and unphosphorylated, but when grown on acetate or ethanol, the activity of IDH declines drastically concomitant with its phosphorylation. This is Isocitrate dehydrogenase kinase/phosphatase from Aromatoleum aromaticum (strain DSM 19018 / LMG 30748 / EbN1) (Azoarcus sp. (strain EbN1)).